We begin with the raw amino-acid sequence, 397 residues long: Elongation factor Tu-2 (397 aa).

The tr-type G domain occupies 10 to 206 (KPHVNIGTIG…AVDEFVPEPV (197 aa)). The tract at residues 19 to 26 (GHIDHGKT) is G1. 19–26 (GHIDHGKT) lines the GTP pocket. Threonine 26 is a binding site for Mg(2+). The tract at residues 62-66 (GITIS) is G2. The G3 stretch occupies residues 83 to 86 (DCPG). GTP-binding positions include 83–87 (DCPGH) and 138–141 (NKTD). A G4 region spans residues 138–141 (NKTD). Residues 176 to 178 (SAL) are G5.

This sequence belongs to the TRAFAC class translation factor GTPase superfamily. Classic translation factor GTPase family. EF-Tu/EF-1A subfamily. As to quaternary structure, monomer.

It is found in the cytoplasm. It catalyses the reaction GTP + H2O = GDP + phosphate + H(+). Its function is as follows. GTP hydrolase that promotes the GTP-dependent binding of aminoacyl-tRNA to the A-site of ribosomes during protein biosynthesis. This chain is Elongation factor Tu-2, found in Streptomyces ramocissimus.